Consider the following 269-residue polypeptide: CCAAT/enhancer-binding protein delta (269 aa).

Disordered regions lie at residues 1–48 (MSAA…PGAA), 97–133 (PLELLPGGPARPLGPGPAAPRLLKREPDWGDGDAPGS), and 151–219 (AAGQ…NQEM). An N-acetylserine modification is found at serine 2. 2 stretches are compositionally biased toward low complexity: residues 36-48 (GAEPGALGEPGAA) and 97-107 (PLELLPGGPAR). Lysine 120 participates in a covalent cross-link: Glycyl lysine isopeptide (Lys-Gly) (interchain with G-Cter in SUMO). A compositionally biased stretch (pro residues) spans 155-175 (PTPPTSPEPPRSSPRQTPAPG). Residues 177 to 201 (AREKSAGKRGPDRGSPEYRQRRERN) show a composition bias toward basic and acidic residues. The bZIP domain maps to 191–254 (SPEYRQRRER…AGLRQFFKQL (64 aa)). The tract at residues 195–222 (RQRRERNNIAVRKSRDKAKRRNQEMQQK) is basic motif. The segment at 226 to 254 (LSAENEKLHQRVEQLTRDLAGLRQFFKQL) is leucine-zipper.

It belongs to the bZIP family. C/EBP subfamily. Binds DNA as a homodimer and as a heterodimer. Can form stable heterodimers with CEBPB. Can form stable heterodimers with CEBPA and CEBPE. Directly interacts with SPI1/PU.1; this interaction does not affect DNA-binding properties of each partner. Interacts with PRDM16.

Its subcellular location is the nucleus. Transcription activator that recognizes two different DNA motifs: the CCAAT homology common to many promoters and the enhanced core homology common to many enhancers. Important transcription factor regulating the expression of genes involved in immune and inflammatory responses. Transcriptional activator that enhances IL6 transcription alone and as heterodimer with CEBPB. The protein is CCAAT/enhancer-binding protein delta (CEBPD) of Homo sapiens (Human).